Consider the following 579-residue polypeptide: Probable cytochrome c oxidase subunit 1-alpha (579 aa).

Residues 1–21 (MSILNEPQGAAAAEDSYENEL) form a disordered region. A helical membrane pass occupies residues 44-64 (IGTLYLVTSFAFFCIGGVMAL). His90 serves as a coordination point for Fe(II)-heme a. 6 consecutive transmembrane segments (helical) span residues 93–113 (IMLL…IMPL), 125–145 (LNMF…GGFL), 174–194 (MWIM…VNFI), 217–237 (VLLT…ALFA), 262–282 (LFWF…FGII), and 295–315 (FGYM…VTVW). Cu cation contacts are provided by His268 and Tyr272. The segment at residues 268-272 (HPEVY) is a cross-link (1'-histidyl-3'-tyrosine (His-Tyr)). 2 residues coordinate Cu cation: His317 and His318. A run of 5 helical transmembrane segments spans residues 319-339 (MYVT…LIAV), 363-383 (MLWA…GVIL), 397-417 (FVVA…MFSG), 437-457 (ITFW…HWLG), and 480-500 (ISTI…YNVW). A heme a3-binding site is contributed by His401. His403 provides a ligand contact to Fe(II)-heme a.

The protein belongs to the heme-copper respiratory oxidase family. In terms of assembly, associates with subunits II, III and IV to form cytochrome c oxidase. Cu(2+) serves as cofactor. The cofactor is heme.

Its subcellular location is the cell membrane. The catalysed reaction is 4 Fe(II)-[cytochrome c] + O2 + 8 H(+)(in) = 4 Fe(III)-[cytochrome c] + 2 H2O + 4 H(+)(out). It participates in energy metabolism; oxidative phosphorylation. Cytochrome c oxidase is the component of the respiratory chain that catalyzes the reduction of oxygen to water. Subunits 1-3 form the functional core of the enzyme complex. CO I is the catalytic subunit of the enzyme. Electrons originating in cytochrome c are transferred via the copper A center of subunit 2 and heme A of subunit 1 to the bimetallic center formed by heme A3 and copper B. The protein is Probable cytochrome c oxidase subunit 1-alpha (ctaD1) of Streptomyces avermitilis (strain ATCC 31267 / DSM 46492 / JCM 5070 / NBRC 14893 / NCIMB 12804 / NRRL 8165 / MA-4680).